A 227-amino-acid polypeptide reads, in one-letter code: NAD(P)H-quinone oxidoreductase subunit K, chloroplastic (227 aa).

Positions 43, 44, 108, and 139 each coordinate [4Fe-4S] cluster. A compositionally biased stretch (polar residues) spans 173–192 (RSFTTNHKFQVGRSSHTGNY). The disordered stretch occupies residues 173-201 (RSFTTNHKFQVGRSSHTGNYDQGFLSKPP).

Belongs to the complex I 20 kDa subunit family. NDH is composed of at least 16 different subunits, 5 of which are encoded in the nucleus. [4Fe-4S] cluster serves as cofactor.

It localises to the plastid. The protein resides in the chloroplast thylakoid membrane. It carries out the reaction a plastoquinone + NADH + (n+1) H(+)(in) = a plastoquinol + NAD(+) + n H(+)(out). The catalysed reaction is a plastoquinone + NADPH + (n+1) H(+)(in) = a plastoquinol + NADP(+) + n H(+)(out). NDH shuttles electrons from NAD(P)H:plastoquinone, via FMN and iron-sulfur (Fe-S) centers, to quinones in the photosynthetic chain and possibly in a chloroplast respiratory chain. The immediate electron acceptor for the enzyme in this species is believed to be plastoquinone. Couples the redox reaction to proton translocation, and thus conserves the redox energy in a proton gradient. The polypeptide is NAD(P)H-quinone oxidoreductase subunit K, chloroplastic (Trachelium caeruleum (Blue throatwort)).